We begin with the raw amino-acid sequence, 76 residues long: UPF0248 protein MMP0286 (76 aa).

Belongs to the UPF0248 family.

The sequence is that of UPF0248 protein MMP0286 from Methanococcus maripaludis (strain DSM 14266 / JCM 13030 / NBRC 101832 / S2 / LL).